The chain runs to 142 residues: Large ribosomal subunit protein uL11 (142 aa).

The protein belongs to the universal ribosomal protein uL11 family. As to quaternary structure, part of the ribosomal stalk of the 50S ribosomal subunit. Interacts with L10 and the large rRNA to form the base of the stalk. L10 forms an elongated spine to which L12 dimers bind in a sequential fashion forming a multimeric L10(L12)X complex. Post-translationally, one or more lysine residues are methylated.

In terms of biological role, forms part of the ribosomal stalk which helps the ribosome interact with GTP-bound translation factors. The polypeptide is Large ribosomal subunit protein uL11 (Bartonella quintana (strain Toulouse) (Rochalimaea quintana)).